Reading from the N-terminus, the 932-residue chain is Chitin synthase regulatory factor 3 (932 aa).

The span at 1 to 16 (MKDSHSSRRKYEKEKL) shows a compositional bias: basic and acidic residues. Disordered regions lie at residues 1-53 (MKDS…PTSR), 264-356 (TLEE…LQQP), and 374-406 (EVPA…NPTV). 3 stretches are compositionally biased toward polar residues: residues 35 to 53 (SGNT…PTSR), 274 to 285 (DSITNTVSNASS), and 308 to 319 (SHFSSTDSNTDS). Over residues 337 to 349 (KSSETLKNPRNDD) the composition is skewed to basic and acidic residues. Ser393 bears the Phosphoserine mark. 7 Sel1-like repeats span residues 638-674 (PEAL…KKGH), 675-710 (PLSN…EMDV), 711-747 (VEAM…KSKG), 751-788 (VRAM…VYGY), 789-825 (AAAQ…EQDY), 826-863 (GEAE…CKGL), and 864-899 (AKAQ…KQGF). The disordered stretch occupies residues 905-932 (RLEEQALSSKQTHSKAPKKKQQEQCVVM).

This is Chitin synthase regulatory factor 3 (chr3) from Schizosaccharomyces pombe (strain 972 / ATCC 24843) (Fission yeast).